A 98-amino-acid chain; its full sequence is Integration host factor subunit alpha (98 aa).

Residues 49–71 form a disordered region; it reads FGNFDLRDKNQRPGRNPKTGEDI.

The protein belongs to the bacterial histone-like protein family. Heterodimer of an alpha and a beta chain.

In terms of biological role, this protein is one of the two subunits of integration host factor, a specific DNA-binding protein that functions in genetic recombination as well as in transcriptional and translational control. The polypeptide is Integration host factor subunit alpha (Shewanella oneidensis (strain ATCC 700550 / JCM 31522 / CIP 106686 / LMG 19005 / NCIMB 14063 / MR-1)).